The following is a 358-amino-acid chain: Aurora kinase (358 aa).

Residues 1–49 (MENKATLARNIGEKRVSPRSKVNGTGKSWRISYSPQRMDGVSSGRNVSK) are disordered. Residues 20-35 (SKVNGTGKSWRISYSP) show a composition bias toward polar residues. Residues 100–358 (FEVGRKLGKG…PWILKNKPFW (259 aa)) form the Protein kinase domain. Residues 106–114 (LGKGKFGKV) and Lys129 contribute to the ATP site. The Proton acceptor role is filled by Asp223.

It belongs to the protein kinase superfamily. Ser/Thr protein kinase family. Aurora subfamily.

Its subcellular location is the nucleus. It is found in the cytoplasm. The protein localises to the cytoskeleton. It localises to the spindle. The protein resides in the chromosome. Its subcellular location is the centromere. It is found in the kinetochore. It catalyses the reaction L-seryl-[protein] + ATP = O-phospho-L-seryl-[protein] + ADP + H(+). The catalysed reaction is L-threonyl-[protein] + ATP = O-phospho-L-threonyl-[protein] + ADP + H(+). Functionally, component of the chromosomal passenger complex (CPC), a complex that acts as a key regulator of chromosome segregation and cytokinesis. Has a role in error-correction of aberrent kinetochore-microtubule attachments to ensure that sister kinetochores become bioriented and connect to opposite poles by promoting spindle assembly checkpoint signaling. This Candida glabrata (strain ATCC 2001 / BCRC 20586 / JCM 3761 / NBRC 0622 / NRRL Y-65 / CBS 138) (Yeast) protein is Aurora kinase (IPL1).